The chain runs to 132 residues: Prefoldin subunit alpha (132 aa).

The protein belongs to the prefoldin subunit alpha family. As to quaternary structure, heterohexamer of two alpha and four beta subunits.

Its subcellular location is the cytoplasm. Molecular chaperone capable of stabilizing a range of proteins. Seems to fulfill an ATP-independent, HSP70-like function in archaeal de novo protein folding. The protein is Prefoldin subunit alpha of Pyrobaculum islandicum (strain DSM 4184 / JCM 9189 / GEO3).